Reading from the N-terminus, the 292-residue chain is Homoserine kinase (292 aa).

Residue 84-94 (PISRGLGSSSA) participates in ATP binding.

It belongs to the GHMP kinase family. Homoserine kinase subfamily.

It is found in the cytoplasm. The enzyme catalyses L-homoserine + ATP = O-phospho-L-homoserine + ADP + H(+). The protein operates within amino-acid biosynthesis; L-threonine biosynthesis; L-threonine from L-aspartate: step 4/5. In terms of biological role, catalyzes the ATP-dependent phosphorylation of L-homoserine to L-homoserine phosphate. The protein is Homoserine kinase of Sulfurovum sp. (strain NBC37-1).